Here is a 192-residue protein sequence, read N- to C-terminus: 7-methyl-GTP pyrophosphatase (192 aa).

The active-site Proton acceptor is Asp69.

It belongs to the Maf family. YceF subfamily. A divalent metal cation serves as cofactor.

The protein localises to the cytoplasm. It catalyses the reaction N(7)-methyl-GTP + H2O = N(7)-methyl-GMP + diphosphate + H(+). Functionally, nucleoside triphosphate pyrophosphatase that hydrolyzes 7-methyl-GTP (m(7)GTP). May have a dual role in cell division arrest and in preventing the incorporation of modified nucleotides into cellular nucleic acids. The chain is 7-methyl-GTP pyrophosphatase (maf-2) from Pseudomonas putida (strain ATCC 47054 / DSM 6125 / CFBP 8728 / NCIMB 11950 / KT2440).